Here is a 420-residue protein sequence, read N- to C-terminus: Ketoreductase sphF (420 aa).

Positions 1–21 are disordered; that stretch reads MLERPSFPRLGAGTRHHRPLG. A helical transmembrane segment spans residues 29–49; it reads WLLAFTGISGIAGMMIPYVPW. The disordered stretch occupies residues 275-298; sequence RQKRSPSPGRHPALGSPPAQLRQD.

It localises to the membrane. The enzyme catalyses 3-oxopresphingofungin + NADPH + 2 H(+) = presphingofungin + NADP(+). Its pathway is secondary metabolite biosynthesis. Ketoreductase; part of the gene cluster that mediates the biosynthesis of sphingofungins, bioactive molecules acting as sphingolipid inhibitors via inhibiting serine palmitoyl transferase (SPT). Within the pathway, sphF catalyzes the reduction of the C-3 ketone of 3-keto-presphingofungin to produce presphingofungin. Sphingofungin biosynthesis starts with the PKS sphB that produces an C18 polyketide precursor 3-hydroxyoctadeca-4,10-dienoyl-ACP containing one delta-6 desaturation and one delta-12 desaturation. The aminoacyl transferase sphA uses the sphB product to produce 3-keto-presphingofungin by adding an aminomalonate molecule. SphF then reduces the C-3 ketone of 3-keto-presphingofungin which leads to presphingofungin. The cytochrome P450 monooxygenase sphH converts presphingofungin into sphingofungin B1 which is further converted to sphingofungin B by the dioxygenase sphC. SphC is also able to convert presphingofungin into sphingofungin B2. The acetyltransferase sphE acetylates sphingofungin B to produce sphingofungin C, but can also convert sphingofungin B1 into sphingofungin C1 and sphingofungin B2 into sphingofungin C2. Finally, sphingofungin C can be spontaneously converted into sphingofungin D. The chain is Ketoreductase sphF from Aspergillus fumigatus (strain CBS 144.89 / FGSC A1163 / CEA10) (Neosartorya fumigata).